The following is a 67-amino-acid chain: Bowman-Birk type proteinase inhibitor 1 (67 aa).

7 disulfides stabilise this stretch: C5–C59, C6–C21, C9–C55, C11–C19, C29–C36, C33–C48, and C38–C46.

Belongs to the Bowman-Birk serine protease inhibitor family. As to quaternary structure, monomer. Although dimerization may occur in solution. As to expression, seed.

In terms of biological role, inhibits trypsin but not chymotrypsin. The inhibitor consists of 2 domains and has 2 sites of interaction with trypsin. This is Bowman-Birk type proteinase inhibitor 1 from Dioclea glabra.